The primary structure comprises 124 residues: Small ribosomal subunit protein uS12 (124 aa).

Residues 1 to 32 (MPTIQQLVRKGRQAKTTKTKTPALKGSPQRRG) form a disordered region. A compositionally biased stretch (basic residues) spans 9–18 (RKGRQAKTTK). Position 89 is a 3-methylthioaspartic acid (aspartate 89). Positions 105–124 (QGVRNRKQARSRYGAKKEKS) are disordered. Basic residues predominate over residues 108-118 (RNRKQARSRYG).

It belongs to the universal ribosomal protein uS12 family. As to quaternary structure, part of the 30S ribosomal subunit. Contacts proteins S8 and S17. May interact with IF1 in the 30S initiation complex.

With S4 and S5 plays an important role in translational accuracy. In terms of biological role, interacts with and stabilizes bases of the 16S rRNA that are involved in tRNA selection in the A site and with the mRNA backbone. Located at the interface of the 30S and 50S subunits, it traverses the body of the 30S subunit contacting proteins on the other side and probably holding the rRNA structure together. The combined cluster of proteins S8, S12 and S17 appears to hold together the shoulder and platform of the 30S subunit. In Salinispora arenicola (strain CNS-205), this protein is Small ribosomal subunit protein uS12.